The chain runs to 357 residues: Thiamine thiazole synthase 1, chloroplastic (357 aa).

Residues Met-1–Ser-51 constitute a chloroplast transit peptide. Substrate-binding positions include Ala-103, Glu-123 to Gln-124, Gly-131, and Ala-196. Position 225 is a 2,3-didehydroalanine (Cys) (Cys-225). Substrate contacts are provided by residues Asp-227, His-242, Met-294, and Arg-304–Gly-306.

Belongs to the THI4 family. In terms of assembly, homooctamer. The cofactor is Fe cation. During the catalytic reaction, a sulfide is transferred from Cys-225 to a reaction intermediate, generating a dehydroalanine residue.

It is found in the plastid. Its subcellular location is the chloroplast. It carries out the reaction [ADP-thiazole synthase]-L-cysteine + glycine + NAD(+) = [ADP-thiazole synthase]-dehydroalanine + ADP-5-ethyl-4-methylthiazole-2-carboxylate + nicotinamide + 3 H2O + 2 H(+). In terms of biological role, involved in biosynthesis of the thiamine precursor thiazole. Catalyzes the conversion of NAD and glycine to adenosine diphosphate 5-(2-hydroxyethyl)-4-methylthiazole-2-carboxylic acid (ADT), an adenylated thiazole intermediate. The reaction includes an iron-dependent sulfide transfer from a conserved cysteine residue of the protein to a thiazole intermediate. The enzyme can only undergo a single turnover, which suggests it is a suicide enzyme. May have additional roles in adaptation to various stress conditions and in DNA damage tolerance. The chain is Thiamine thiazole synthase 1, chloroplastic from Physcomitrium patens (Spreading-leaved earth moss).